The sequence spans 798 residues: Exo-1,4-beta-xylosidase xlnD (798 aa).

A signal peptide spans 1-20; the sequence is MPGAASIVAVLAALLPTALG. Residues Asn-23, Asn-87, Asn-142, and Asn-237 are each glycosylated (N-linked (GlcNAc...) asparagine). Residue Asp-310 is part of the active site. N-linked (GlcNAc...) asparagine glycosylation is found at Asn-326, Asn-391, Asn-404, Asn-443, Asn-480, Asn-522, Asn-618, Asn-645, Asn-658, Asn-685, and Asn-707.

This sequence belongs to the glycosyl hydrolase 3 family.

The protein localises to the secreted. The catalysed reaction is Hydrolysis of (1-&gt;4)-beta-D-xylans, to remove successive D-xylose residues from the non-reducing termini.. It functions in the pathway glycan degradation; xylan degradation. In terms of biological role, xylan 1,4-beta-xylosidase involved in the hydrolysis of xylan, a major structural heterogeneous polysaccharide found in plant biomass representing the second most abundant polysaccharide in the biosphere, after cellulose. The chain is Exo-1,4-beta-xylosidase xlnD (xlnD) from Aspergillus oryzae (strain ATCC 42149 / RIB 40) (Yellow koji mold).